The sequence spans 259 residues: Ferritin-4, chloroplastic (259 aa).

A chloroplast-targeting transit peptide spans 1–57 (MLLKTVSSSSSSALSLVNFHGVKKDVSPLLPSISSNLRVSSGKSGNLTFSFRASKSS). The extension peptide (EP) stretch occupies residues 58-90 (TTDALSGVVFEPFKEVKKELDLVPTSSHLSLAR). Positions 91–244 (QKYSDECEAA…EYVAQLRRVG (154 aa)) constitute a Ferritin-like diiron domain. Fe cation is bound by residues E108, E143, H146, E192, and Q226.

The protein belongs to the ferritin family. In terms of assembly, oligomer of 24 subunits. There are two types of subunits: L (light) chain and H (heavy) chain. The major chain can be light or heavy, depending on the species and tissue type. The functional molecule forms a roughly spherical shell with a diameter of 12 nm and contains a central cavity into which the insoluble mineral iron core is deposited.

The protein resides in the plastid. The protein localises to the chloroplast. The catalysed reaction is 4 Fe(2+) + O2 + 4 H(+) = 4 Fe(3+) + 2 H2O. Its function is as follows. Stores iron in a soluble, non-toxic, readily available form. Important for iron homeostasis. Has ferroxidase activity. Iron is taken up in the ferrous form and deposited as ferric hydroxides after oxidation. In Arabidopsis thaliana (Mouse-ear cress), this protein is Ferritin-4, chloroplastic (FER4).